The following is a 1108-amino-acid chain: Retinal guanylyl cyclase 1 (1108 aa).

The N-terminal stretch at 1 to 54 (MSAWLLPAGGLPGAGFCVPARQSPSSFSRVLRWPRPGLPGLLLLLLLPSPSALS) is a signal peptide. The Extracellular portion of the chain corresponds to 55 to 465 (AVFKVGVLGP…PDVICNGGVE (411 aa)). Cys-108 and Cys-136 form a disulfide bridge. Asn-300 is a glycosylation site (N-linked (GlcNAc...) asparagine). The helical transmembrane segment at 466–490 (PGLVFVGFLLVIGMGLTGAFLAHYL) threads the bilayer. Residues 491 to 811 (RHRLLHMQMA…DLTFDLFKSI (321 aa)) form the Protein kinase domain. Topologically, residues 491–1108 (RHRLLHMQMA…KARPGQFTGK (618 aa)) are cytoplasmic. The 131-residue stretch at 883–1013 (TLYFSDIVGF…DTVNTASRME (131 aa)) folds into the Guanylate cyclase domain. The segment at 1069-1108 (IPKPPDLQPGASNHGISLQEIPPERRKKLEKARPGQFTGK) is disordered.

This sequence belongs to the adenylyl cyclase class-4/guanylyl cyclase family. As to quaternary structure, homodimer; requires homodimerization for guanylyl cyclase activity. Interacts (via C-terminus) with RD3 (via C-terminus); promotes the exit of GUCY2E from the endoplasmic reticulum and its trafficking to the photoreceptor outer segments. Interaction with RD3 negatively regulates GUCY2E guanylate cyclase activity. Post-translationally, there are 9 conserved cysteine residues in sensory guanylate cyclases, 6 in the extracellular domain, which may be involved in intra- or interchain disulfide bonds.

Its subcellular location is the photoreceptor outer segment membrane. It is found in the endoplasmic reticulum membrane. It carries out the reaction GTP = 3',5'-cyclic GMP + diphosphate. With respect to regulation, activated by GUCA1A when free calcium ions concentration is low, and inhibited by GUCA1A when free calcium ions concentration is high. Negatively regulated by RD3; RD3 inhibits the basal and GUCA1A-stimulated guanylate cyclase activity. Catalyzes the synthesis of cyclic GMP (cGMP) in rods and cones of photoreceptors. Plays an essential role in phototransduction, by mediating cGMP replenishment. May also participate in the trafficking of membrane-asociated proteins to the photoreceptor outer segment membrane. In Mus musculus (Mouse), this protein is Retinal guanylyl cyclase 1 (Gucy2e).